The following is an 84-amino-acid chain: Acyl carrier protein (84 aa).

Positions 4 to 80 constitute a Carrier domain; the sequence is SETFEKVKKI…EAVDYINNQV (77 aa). Serine 40 carries the O-(pantetheine 4'-phosphoryl)serine modification.

The protein belongs to the acyl carrier protein (ACP) family. 4'-phosphopantetheine is transferred from CoA to a specific serine of apo-ACP by AcpS. This modification is essential for activity because fatty acids are bound in thioester linkage to the sulfhydryl of the prosthetic group.

It localises to the cytoplasm. It functions in the pathway lipid metabolism; fatty acid biosynthesis. Its function is as follows. Carrier of the growing fatty acid chain in fatty acid biosynthesis. This is Acyl carrier protein from Nostoc sp. (strain PCC 7120 / SAG 25.82 / UTEX 2576).